Reading from the N-terminus, the 399-residue chain is Elongation factor Tu (399 aa).

The region spanning 10-204 (KPHVNIGTIG…AVDANIPEPV (195 aa)) is the tr-type G domain. The interval 19–26 (GHVDHGKT) is G1. 19-26 (GHVDHGKT) lines the GTP pocket. Position 26 (threonine 26) interacts with Mg(2+). Residues 60–64 (GITIN) form a G2 region. Residues 81 to 84 (DCPG) form a G3 region. GTP is bound by residues 81–85 (DCPGH) and 136–139 (NKCD). The segment at 136–139 (NKCD) is G4. The G5 stretch occupies residues 174–176 (SGL).

Belongs to the TRAFAC class translation factor GTPase superfamily. Classic translation factor GTPase family. EF-Tu/EF-1A subfamily. As to quaternary structure, monomer.

Its subcellular location is the cytoplasm. It catalyses the reaction GTP + H2O = GDP + phosphate + H(+). In terms of biological role, GTP hydrolase that promotes the GTP-dependent binding of aminoacyl-tRNA to the A-site of ribosomes during protein biosynthesis. In Synechococcus sp. (strain RCC307), this protein is Elongation factor Tu.